The following is a 382-amino-acid chain: Homoserine O-succinyltransferase (382 aa).

The AB hydrolase-1 domain occupies 51–359; sequence NAVLICHALS…DAPWGHDAFL (309 aa). The Nucleophile role is filled by Ser157. Residue Arg227 participates in substrate binding. Catalysis depends on residues Asp322 and His355. Position 356 (Asp356) interacts with substrate.

This sequence belongs to the AB hydrolase superfamily. MetX family. Homodimer.

It localises to the cytoplasm. It catalyses the reaction L-homoserine + succinyl-CoA = O-succinyl-L-homoserine + CoA. It participates in amino-acid biosynthesis; L-methionine biosynthesis via de novo pathway; O-succinyl-L-homoserine from L-homoserine: step 1/1. Functionally, transfers a succinyl group from succinyl-CoA to L-homoserine, forming succinyl-L-homoserine. This chain is Homoserine O-succinyltransferase, found in Marinobacter nauticus (strain ATCC 700491 / DSM 11845 / VT8) (Marinobacter aquaeolei).